We begin with the raw amino-acid sequence, 455 residues long: tRNA modification GTPase MnmE (455 aa).

Arg22, Glu85, and Arg124 together coordinate (6S)-5-formyl-5,6,7,8-tetrahydrofolate. Residues 220-377 (GIYTVIVGRP…VEKAIKEAIL (158 aa)) form the TrmE-type G domain. Asn230 contacts K(+). GTP is bound by residues 230–235 (NVGKSS), 249–255 (TDIPGTT), and 274–277 (DTAG). Residue Ser234 participates in Mg(2+) binding. Residues Thr249, Ile251, and Thr254 each contribute to the K(+) site. Position 255 (Thr255) interacts with Mg(2+). Lys455 is a binding site for (6S)-5-formyl-5,6,7,8-tetrahydrofolate.

The protein belongs to the TRAFAC class TrmE-Era-EngA-EngB-Septin-like GTPase superfamily. TrmE GTPase family. In terms of assembly, homodimer. Heterotetramer of two MnmE and two MnmG subunits. K(+) is required as a cofactor.

The protein resides in the cytoplasm. In terms of biological role, exhibits a very high intrinsic GTPase hydrolysis rate. Involved in the addition of a carboxymethylaminomethyl (cmnm) group at the wobble position (U34) of certain tRNAs, forming tRNA-cmnm(5)s(2)U34. In Caldicellulosiruptor saccharolyticus (strain ATCC 43494 / DSM 8903 / Tp8T 6331), this protein is tRNA modification GTPase MnmE.